Here is a 121-residue protein sequence, read N- to C-terminus: NADH-quinone oxidoreductase subunit A 2 (121 aa).

Helical transmembrane passes span 6–26 (FLPV…TLFV), 60–80 (VPFF…MFLF), and 89–109 (IGFV…VGFA).

It belongs to the complex I subunit 3 family. NDH-1 is composed of 14 different subunits. Subunits NuoA, H, J, K, L, M, N constitute the membrane sector of the complex.

The protein localises to the cell inner membrane. The enzyme catalyses a quinone + NADH + 5 H(+)(in) = a quinol + NAD(+) + 4 H(+)(out). NDH-1 shuttles electrons from NADH, via FMN and iron-sulfur (Fe-S) centers, to quinones in the respiratory chain. The immediate electron acceptor for the enzyme in this species is believed to be ubiquinone. Couples the redox reaction to proton translocation (for every two electrons transferred, four hydrogen ions are translocated across the cytoplasmic membrane), and thus conserves the redox energy in a proton gradient. The sequence is that of NADH-quinone oxidoreductase subunit A 2 from Rhizobium meliloti (strain 1021) (Ensifer meliloti).